The chain runs to 178 residues: Large ribosomal subunit protein uL10 (178 aa).

It belongs to the universal ribosomal protein uL10 family. As to quaternary structure, part of the ribosomal stalk of the 50S ribosomal subunit. The N-terminus interacts with L11 and the large rRNA to form the base of the stalk. The C-terminus forms an elongated spine to which L12 dimers bind in a sequential fashion forming a multimeric L10(L12)X complex.

Functionally, forms part of the ribosomal stalk, playing a central role in the interaction of the ribosome with GTP-bound translation factors. The polypeptide is Large ribosomal subunit protein uL10 (Dictyoglomus turgidum (strain DSM 6724 / Z-1310)).